Consider the following 406-residue polypeptide: Vacuole membrane protein 1 (406 aa).

Positions 1–22 are disordered; the sequence is MAENGTDCEQRRVGMPKEQNNG. The Cytoplasmic segment spans residues 1–42; sequence MAENGTDCEQRRVGMPKEQNNGSFQDPSFMCNRKRRDREERQ. Residues 43-63 traverse the membrane as a helical segment; it reads SIVLWRKPLITLQYFILEVLI. Residues 64 to 76 are Extracellular-facing; the sequence is NLKEWSVRLWHRR. The chain crosses the membrane as a helical span at residues 77–97; it reads MMVVSVLLLLAVLSVAYYIEG. At 98-110 the chain is on the cytoplasmic side; that stretch reads EHQQCVQYIEKKC. Residues 111–131 traverse the membrane as a helical segment; sequence LWCAYWVGLGILSSVGLGTGL. The Extracellular segment spans residues 132–250; that stretch reads HTFLLYLGPH…ATRAKLTVQN (119 aa). Residues 173 to 316 are VTT domain; the sequence is GTEGAISLWT…FVIITFSKHI (144 aa). Residues 251–271 form a helical membrane-spanning segment; that stretch reads LVQKVGFLGILACASIPNPLF. Topologically, residues 272–273 are cytoplasmic; sequence DL. Residues 274–294 form a helical membrane-spanning segment; it reads AGITCGHFLVPFWTFFGATLI. Over 295–306 the chain is Extracellular; the sequence is GKAIIKMHIQKL. A helical transmembrane segment spans residues 307-327; that stretch reads FVIITFSKHIVEQMVSLIGVI. Topologically, residues 328–363 are cytoplasmic; that stretch reads PSIGPSLQKPFQEYLEAQRKKLHHKGDSGTPQSENW. The helical transmembrane segment at 364-384 threads the bilayer; sequence LSWAFEKLVIIMVFYFILSII. Topologically, residues 385 to 406 are extracellular; it reads NSMAQSYAKRVQQKKLSVEKTK.

Belongs to the VMP1 family.

It localises to the endoplasmic reticulum-Golgi intermediate compartment membrane. The protein localises to the cell membrane. The protein resides in the vacuole membrane. Its subcellular location is the endoplasmic reticulum membrane. It carries out the reaction a 1,2-diacyl-sn-glycero-3-phospho-L-serine(in) = a 1,2-diacyl-sn-glycero-3-phospho-L-serine(out). The enzyme catalyses cholesterol(in) = cholesterol(out). The catalysed reaction is a 1,2-diacyl-sn-glycero-3-phosphocholine(in) = a 1,2-diacyl-sn-glycero-3-phosphocholine(out). It catalyses the reaction a 1,2-diacyl-sn-glycero-3-phosphoethanolamine(in) = a 1,2-diacyl-sn-glycero-3-phosphoethanolamine(out). Its function is as follows. Phospholipid scramblase involved in lipid homeostasis and membrane dynamics processes. Has phospholipid scramblase activity toward cholesterol and phosphatidylserine, as well as phosphatidylethanolamine and phosphatidylcholine. Required for autophagosome formation: participates in early stages of autophagosome biogenesis at the endoplasmic reticulum (ER) membrane by reequilibrating the leaflets of the ER as lipids are extracted by atg2 (atg2a or atg2b) to mediate autophagosome assembly. In addition to autophagy, involved in other processes in which phospholipid scramblase activity is required. Modulates ER contacts with lipid droplets, mitochondria and endosomes. The protein is Vacuole membrane protein 1 of Xenopus laevis (African clawed frog).